We begin with the raw amino-acid sequence, 526 residues long: Bifunctional purine biosynthesis protein PurH (526 aa).

One can recognise an MGS-like domain in the interval 1–148; that stretch reads MQRPIIIRRA…KNYSNVVVVV (148 aa).

The protein belongs to the PurH family.

It catalyses the reaction (6R)-10-formyltetrahydrofolate + 5-amino-1-(5-phospho-beta-D-ribosyl)imidazole-4-carboxamide = 5-formamido-1-(5-phospho-D-ribosyl)imidazole-4-carboxamide + (6S)-5,6,7,8-tetrahydrofolate. The enzyme catalyses IMP + H2O = 5-formamido-1-(5-phospho-D-ribosyl)imidazole-4-carboxamide. The protein operates within purine metabolism; IMP biosynthesis via de novo pathway; 5-formamido-1-(5-phospho-D-ribosyl)imidazole-4-carboxamide from 5-amino-1-(5-phospho-D-ribosyl)imidazole-4-carboxamide (10-formyl THF route): step 1/1. Its pathway is purine metabolism; IMP biosynthesis via de novo pathway; IMP from 5-formamido-1-(5-phospho-D-ribosyl)imidazole-4-carboxamide: step 1/1. The chain is Bifunctional purine biosynthesis protein PurH from Baumannia cicadellinicola subsp. Homalodisca coagulata.